A 206-amino-acid chain; its full sequence is Charged multivesicular body protein 6 (206 aa).

Residue glycine 2 is the site of N-myristoyl glycine attachment. A coiled-coil region spans residues 11-103 (TRVTEQDRAV…AQIEMKVIEG (93 aa)). Positions 167–206 (EADLELPEVPGEELPEVPEQEPVREKERVKKKPEREMVAV) are disordered. The segment covering 168-185 (ADLELPEVPGEELPEVPE) has biased composition (acidic residues). The Type-2 MIT-interacting motif signature appears at 170 to 181 (LELPEVPGEELP). Basic and acidic residues predominate over residues 187–206 (EPVREKERVKKKPEREMVAV).

The protein belongs to the SNF7 family. In terms of assembly, probable core component of the endosomal sorting required for transport complex III (ESCRT-III). ESCRT-III components are thought to multimerize to form a flat lattice on the perimeter membrane of the endosome.

The protein localises to the endomembrane system. Its subcellular location is the late endosome membrane. In terms of biological role, probable core component of the endosomal sorting required for transport complex III (ESCRT-III) which is involved in multivesicular bodies (MVBs) formation and sorting of endosomal cargo proteins into MVBs. MVBs contain intraluminal vesicles (ILVs) that are generated by invagination and scission from the limiting membrane of the endosome and mostly are delivered to lysosomes enabling degradation of membrane proteins, such as stimulated growth factor receptors, lysosomal enzymes and lipids. In the ESCRT-III complex, it probably serves as an acceptor for the ESCRT-II complex on endosomal membranes. The sequence is that of Charged multivesicular body protein 6 (chmp6) from Danio rerio (Zebrafish).